We begin with the raw amino-acid sequence, 288 residues long: Oxaloacetate decarboxylase (288 aa).

Serine 47 lines the substrate pocket. Aspartate 85 provides a ligand contact to Mg(2+). Residues arginine 156 and histidine 232 each contribute to the substrate site.

Belongs to the isocitrate lyase/PEP mutase superfamily. Oxaloacetate decarboxylase family. Homotetramer; dimer of dimers. It depends on Mg(2+) as a cofactor.

It carries out the reaction oxaloacetate + H(+) = pyruvate + CO2. Functionally, catalyzes the decarboxylation of oxaloacetate into pyruvate. Seems to play a role in maintaining cellular concentrations of bicarbonate and pyruvate. This is Oxaloacetate decarboxylase from Bradyrhizobium sp. (strain ORS 278).